The chain runs to 258 residues: Putative cysteine-rich repeat secretory protein 61 (258 aa).

Positions 1-31 (MSSSFIPKRIALVLNLAMVAIQVFFIRSVSS) are cleaved as a signal peptide. Gnk2-homologous domains lie at 38-140 (YLYH…PTAF) and 146-253 (DKNK…IYPF).

Belongs to the cysteine-rich repeat secretory protein family.

It localises to the secreted. The chain is Putative cysteine-rich repeat secretory protein 61 (CRRSP61) from Arabidopsis thaliana (Mouse-ear cress).